The following is a 68-amino-acid chain: Conotoxin Lt5.2 (68 aa).

The N-terminal stretch at methionine 1 to proline 19 is a signal peptide. Positions lysine 20–alanine 54 are excised as a propeptide.

It belongs to the conotoxin T superfamily. Post-translationally, contains 2 disulfide bonds that can be either 'C1-C3, C2-C4' or 'C1-C4, C2-C3', since these disulfide connectivities have been observed for conotoxins with cysteine framework V (for examples, see AC P0DQQ7 and AC P81755). In terms of tissue distribution, expressed by the venom duct.

It localises to the secreted. This Conus litteratus (Lettered cone) protein is Conotoxin Lt5.2.